Reading from the N-terminus, the 248-residue chain is Small ribosomal subunit protein uS3 (248 aa).

Positions Ile-38–Lys-106 constitute a KH type-2 domain. The span at Ser-214 to Ala-230 shows a compositional bias: basic and acidic residues. Positions Ser-214–Gly-248 are disordered.

This sequence belongs to the universal ribosomal protein uS3 family. Part of the 30S ribosomal subunit. Forms a tight complex with proteins S10 and S14.

In terms of biological role, binds the lower part of the 30S subunit head. Binds mRNA in the 70S ribosome, positioning it for translation. The sequence is that of Small ribosomal subunit protein uS3 from Corynebacterium glutamicum (strain R).